Reading from the N-terminus, the 167-residue chain is Photosystem I assembly protein Ycf3 (167 aa).

3 TPR repeats span residues 35 to 68, 72 to 105, and 120 to 153; these read AFAYYRDGMSAQSEGEYAEALQNYYEAMRLEVDA, SYILYNIGLIHTSNGEHARALEYYYQALERNPSL, and GEQAIEKGQAEISSLLFDKAADYWKEAIRLAPTN.

It belongs to the Ycf3 family.

It is found in the plastid. Its subcellular location is the chloroplast thylakoid membrane. Functionally, essential for the assembly of the photosystem I (PSI) complex. May act as a chaperone-like factor to guide the assembly of the PSI subunits. This is Photosystem I assembly protein Ycf3 from Stigeoclonium helveticum (Green alga).